The chain runs to 508 residues: Photosystem II CP47 reaction center protein (508 aa).

The next 6 membrane-spanning stretches (helical) occupy residues 21–36 (AVHI…WAGS), 101–115 (IVFS…IWHW), 140–156 (GIHL…FGAF), 203–218 (IAAG…FHLS), 237–252 (VLSS…AFVV), and 457–472 (SFAL…HGAR).

Belongs to the PsbB/PsbC family. PsbB subfamily. As to quaternary structure, PSII is composed of 1 copy each of membrane proteins PsbA, PsbB, PsbC, PsbD, PsbE, PsbF, PsbH, PsbI, PsbJ, PsbK, PsbL, PsbM, PsbT, PsbX, PsbY, PsbZ, Psb30/Ycf12, at least 3 peripheral proteins of the oxygen-evolving complex and a large number of cofactors. It forms dimeric complexes. Interacts with PAM68. Interacts with HHL1. It depends on Binds multiple chlorophylls. PSII binds additional chlorophylls, carotenoids and specific lipids. as a cofactor.

The protein localises to the plastid. Its subcellular location is the chloroplast thylakoid membrane. One of the components of the core complex of photosystem II (PSII). It binds chlorophyll and helps catalyze the primary light-induced photochemical processes of PSII. PSII is a light-driven water:plastoquinone oxidoreductase, using light energy to abstract electrons from H(2)O, generating O(2) and a proton gradient subsequently used for ATP formation. The protein is Photosystem II CP47 reaction center protein of Arabidopsis thaliana (Mouse-ear cress).